Here is a 573-residue protein sequence, read N- to C-terminus: MKASQFFISTLKEAPADAEIVSHKLMMRAGMIKKLGAGIYNYMPIGLRVIRKVENIVREEMNRAGAVELSMPVIQPAELWQETGRWDKMGPELLRLKDRHERDFAVQPTSEEVVTDIARSEIRSYKQLPVNFYQIQTKFRDERRPRFGIMRGREFTMKDAYSFDRDTDGLRKSYENMYDAYVRIFRRFGLEFRAVAADNGAIGGSGSHEFHVIADTGEDAIVYCPTSDYAANMEAAEALPLLASRAAPAEDLVKTATPEKAKCEHVAEFLGIPLQRTVKSIVLAKDTEAGAEIWLLLIRGDHELNEVKASKVPGLADFRFATENEIVDAFGSPPGYLGPIGAKKPVKVVADRTVANMSDFVCGANYRDYHYTGVNWGRDLPEPVVADLRNVVAGDASPDGQGTLEICRGIEVGHVFMLGTRYSESMNATFLDENGKTQPMQMGCYGIGVTRILGAAIEQNFDERGIIWPAAIAPFAVVICPVGYDRSEAVKAEADRIHAELLAAGVDVILDDRGERPGVMFADWELIGVPHRVVVGDRGLKEGKVEYQGRRDAQATAVSVADVVGHVRSQLAN.

Belongs to the class-II aminoacyl-tRNA synthetase family. ProS type 1 subfamily. As to quaternary structure, homodimer.

The protein resides in the cytoplasm. The catalysed reaction is tRNA(Pro) + L-proline + ATP = L-prolyl-tRNA(Pro) + AMP + diphosphate. Functionally, catalyzes the attachment of proline to tRNA(Pro) in a two-step reaction: proline is first activated by ATP to form Pro-AMP and then transferred to the acceptor end of tRNA(Pro). As ProRS can inadvertently accommodate and process non-cognate amino acids such as alanine and cysteine, to avoid such errors it has two additional distinct editing activities against alanine. One activity is designated as 'pretransfer' editing and involves the tRNA(Pro)-independent hydrolysis of activated Ala-AMP. The other activity is designated 'posttransfer' editing and involves deacylation of mischarged Ala-tRNA(Pro). The misacylated Cys-tRNA(Pro) is not edited by ProRS. The chain is Proline--tRNA ligase from Cupriavidus necator (strain ATCC 17699 / DSM 428 / KCTC 22496 / NCIMB 10442 / H16 / Stanier 337) (Ralstonia eutropha).